We begin with the raw amino-acid sequence, 323 residues long: ATP synthase gamma chain (323 aa).

The protein belongs to the ATPase gamma chain family. In terms of assembly, F-type ATPases have 2 components, CF(1) - the catalytic core - and CF(0) - the membrane proton channel. CF(1) has five subunits: alpha(3), beta(3), gamma(1), delta(1), epsilon(1). CF(0) has three main subunits: a, b and c.

The protein resides in the cell membrane. Produces ATP from ADP in the presence of a proton gradient across the membrane. The gamma chain is believed to be important in regulating ATPase activity and the flow of protons through the CF(0) complex. The protein is ATP synthase gamma chain of Nocardia farcinica (strain IFM 10152).